The primary structure comprises 290 residues: MSVSVSVDAETNVVGLIGHPVEHSLSPAMHNAAFKELGLNYVYLAFDVPPERLEGAVRGAADLGIVGLNVTIPHKEAVMELCDELDRDAELIGAVNTVRFSRGKIEGFNTDGEGFLRALREETYFDPRGTKSVILGAGGAARAVSFKLATEGADEIVIANRTVDRAERLAEELKEKVGVKARAIGLDGDEIERELRDADLLVDATPVGMYPNEDEPPLVTADQMHEDLIVNDLVYNPPRTRLLEEAEKAGATPVSGVGMLVYQGALAFELWTGEEAPVEVMREAVLEHLR.

Shikimate-binding positions include 24–26 and threonine 71; that span reads SLS. Lysine 75 acts as the Proton acceptor in catalysis. Shikimate contacts are provided by asparagine 96 and aspartate 111. NADP(+)-binding positions include 136–140, 160–165, and leucine 233; these read GAGGA and NRTVDR. Tyrosine 235 serves as a coordination point for shikimate. Residue glycine 256 participates in NADP(+) binding.

The protein belongs to the shikimate dehydrogenase family. Homodimer.

It carries out the reaction shikimate + NADP(+) = 3-dehydroshikimate + NADPH + H(+). Its pathway is metabolic intermediate biosynthesis; chorismate biosynthesis; chorismate from D-erythrose 4-phosphate and phosphoenolpyruvate: step 4/7. Functionally, involved in the biosynthesis of the chorismate, which leads to the biosynthesis of aromatic amino acids. Catalyzes the reversible NADPH linked reduction of 3-dehydroshikimate (DHSA) to yield shikimate (SA). The chain is Shikimate dehydrogenase (NADP(+)) from Methanopyrus kandleri (strain AV19 / DSM 6324 / JCM 9639 / NBRC 100938).